Reading from the N-terminus, the 473-residue chain is 3-isopropylmalate dehydratase large subunit (473 aa).

Residues Cys-353, Cys-414, and Cys-417 each coordinate [4Fe-4S] cluster.

Belongs to the aconitase/IPM isomerase family. LeuC type 1 subfamily. As to quaternary structure, heterodimer of LeuC and LeuD. Requires [4Fe-4S] cluster as cofactor.

The enzyme catalyses (2R,3S)-3-isopropylmalate = (2S)-2-isopropylmalate. It participates in amino-acid biosynthesis; L-leucine biosynthesis; L-leucine from 3-methyl-2-oxobutanoate: step 2/4. Catalyzes the isomerization between 2-isopropylmalate and 3-isopropylmalate, via the formation of 2-isopropylmaleate. The polypeptide is 3-isopropylmalate dehydratase large subunit (Cellvibrio japonicus (strain Ueda107) (Pseudomonas fluorescens subsp. cellulosa)).